The sequence spans 352 residues: Speedy protein E18 (352 aa).

The segment covering 1 to 12 (MDRTKTRFRKRG) has biased composition (basic residues). The interval 1 to 90 (MDRTKTRFRK…EPEKELAPEP (90 aa)) is disordered. The span at 16–39 (GKITTSRQPHPQNEQSLQRSTSGY) shows a compositional bias: polar residues. Residues 76–90 (DESEEEPEKELAPEP) show a composition bias toward acidic residues.

It belongs to the Speedy/Ringo family.

The protein is Speedy protein E18 of Homo sapiens (Human).